We begin with the raw amino-acid sequence, 733 residues long: Polyribonucleotide nucleotidyltransferase (733 aa).

Residues Asp-488 and Asp-494 each coordinate Mg(2+). Residues 555–614 enclose the KH domain; sequence PRIEVMNIAVDKIRDVIGTGGKVIREIVEQTGAKINIEDDGTIRIASADAKTIEAAKRWI. The S1 motif domain maps to 624–692; that stretch reads GVIYQGTVVK…ERGKVRLSMK (69 aa). Basic and acidic residues predominate over residues 711–722; it reads EQEKYTEETHKS. Positions 711–733 are disordered; that stretch reads EQEKYTEETHKSENKRRRKKKEE. Residues 723–733 are compositionally biased toward basic residues; sequence ENKRRRKKKEE.

It belongs to the polyribonucleotide nucleotidyltransferase family. It depends on Mg(2+) as a cofactor.

The protein resides in the cytoplasm. It carries out the reaction RNA(n+1) + phosphate = RNA(n) + a ribonucleoside 5'-diphosphate. Involved in mRNA degradation. Catalyzes the phosphorolysis of single-stranded polyribonucleotides processively in the 3'- to 5'-direction. This Bartonella henselae (strain ATCC 49882 / DSM 28221 / CCUG 30454 / Houston 1) (Rochalimaea henselae) protein is Polyribonucleotide nucleotidyltransferase.